Here is a 197-residue protein sequence, read N- to C-terminus: MYTPPLARLIEQLQRLPGVGPKTAQRLALHILKRPENEIQALASALIEAKKKVGLCNVCFHFSADPICEICRNPNRDKQTICVVADSRDVIALEKTREYKGRYHVLGGVMSPMDGIGPEQLYIQPLVRRVTQDGVKEVILAISPTVEGETTTLYIGQLLKPFTKVTRIAFGLPMGGDLEYADEVTLARALEGRRELD.

The C4-type zinc-finger motif lies at 56 to 71; it reads CNVCFHFSADPICEIC. Residues 79-173 enclose the Toprim domain; it reads QTICVVADSR…KVTRIAFGLP (95 aa).

This sequence belongs to the RecR family.

In terms of biological role, may play a role in DNA repair. It seems to be involved in an RecBC-independent recombinational process of DNA repair. It may act with RecF and RecO. This is Recombination protein RecR from Rippkaea orientalis (strain PCC 8801 / RF-1) (Cyanothece sp. (strain PCC 8801)).